The chain runs to 418 residues: Serine/threonine transporter SstT (418 aa).

The next 8 membrane-spanning stretches (helical) occupy residues 21-41, 49-69, 83-103, 142-162, 190-210, 217-237, 299-319, and 331-351; these read ILIGLVAGIVLALVSTPAAIA, FVGALKAVAPVLVLMLVIASI, ILFLYVLGAFSAALVAVVVSF, ALLNANYIGILAWAVGLGIAL, FAPLGIFGLVASTIAATGFGA, LLVVLIGCMLLVALVVNPLIV, MAGAAITITVLTLAAVHTLGI, and VVAAVCACGASGVAGGSLLLI.

This sequence belongs to the dicarboxylate/amino acid:cation symporter (DAACS) (TC 2.A.23) family.

Its subcellular location is the cell inner membrane. The enzyme catalyses L-serine(in) + Na(+)(in) = L-serine(out) + Na(+)(out). It catalyses the reaction L-threonine(in) + Na(+)(in) = L-threonine(out) + Na(+)(out). In terms of biological role, involved in the import of serine and threonine into the cell, with the concomitant import of sodium (symport system). The sequence is that of Serine/threonine transporter SstT from Yersinia pseudotuberculosis serotype O:1b (strain IP 31758).